Reading from the N-terminus, the 105-residue chain is ATP synthase subunit c (105 aa).

Transmembrane regions (helical) follow at residues 32–52 (SILG…IGMG) and 78–98 (VAMA…IIAI).

It belongs to the ATPase C chain family. In terms of assembly, F-type ATPases have 2 components, F(1) - the catalytic core - and F(0) - the membrane proton channel. F(1) has five subunits: alpha(3), beta(3), gamma(1), delta(1), epsilon(1). F(0) has three main subunits: a(1), b(2) and c(10-14). The alpha and beta chains form an alternating ring which encloses part of the gamma chain. F(1) is attached to F(0) by a central stalk formed by the gamma and epsilon chains, while a peripheral stalk is formed by the delta and b chains.

It localises to the cell inner membrane. In terms of biological role, f(1)F(0) ATP synthase produces ATP from ADP in the presence of a proton or sodium gradient. F-type ATPases consist of two structural domains, F(1) containing the extramembraneous catalytic core and F(0) containing the membrane proton channel, linked together by a central stalk and a peripheral stalk. During catalysis, ATP synthesis in the catalytic domain of F(1) is coupled via a rotary mechanism of the central stalk subunits to proton translocation. Functionally, key component of the F(0) channel; it plays a direct role in translocation across the membrane. A homomeric c-ring of between 10-14 subunits forms the central stalk rotor element with the F(1) delta and epsilon subunits. The polypeptide is ATP synthase subunit c (Helicobacter pylori (strain ATCC 700392 / 26695) (Campylobacter pylori)).